Reading from the N-terminus, the 127-residue chain is Calcitonin receptor-stimulating peptide 1 (127 aa).

The first 25 residues, Met-1–Ala-25, serve as a signal peptide directing secretion. Residues Ala-26–Gln-79 constitute a propeptide that is removed on maturation. A disulfide bridge connects residues Cys-83 and Cys-88.

This sequence belongs to the calcitonin family.

Its subcellular location is the secreted. Its function is as follows. Stimulates cAMP production in porcine kidney cell line LLC-PK1 via the calcitonin receptor (CT) but not via the CT-like (CL) receptor. The sequence is that of Calcitonin receptor-stimulating peptide 1 (CRSP1) from Canis lupus familiaris (Dog).